A 230-amino-acid chain; its full sequence is Mitochondrial fission factor homolog B (230 aa).

Over 1-210 (MSGAAFPSPT…ENKERAKREM (210 aa)) the chain is Cytoplasmic. The segment at 117 to 153 (EQTSSVSHPSEEVRTQTKTRRERSVSENAGVHHNGPL) is disordered. S142 carries the post-translational modification Phosphoserine. Residues 179–210 (VDATSLRRQIVKLNRRLQLLEEENKERAKREM) are a coiled coil. The chain crosses the membrane as a helical; Anchor for type IV membrane protein span at residues 211–228 (VMYSITVAFWLVNSWVWF). Residues 229 to 230 (RR) lie on the Extracellular side of the membrane.

Belongs to the Tango11 family.

It is found in the mitochondrion outer membrane. It localises to the peroxisome. Plays a role in mitochondrial and peroxisomal fission. Promotes the recruitment and association of the fission mediator dynamin-related protein 1 (DNM1L) to the mitochondrial surface. This chain is Mitochondrial fission factor homolog B, found in Danio rerio (Zebrafish).